Reading from the N-terminus, the 362-residue chain is Sphingolipid delta(4)-desaturase (362 aa).

Over residues 1–10 the composition is skewed to low complexity; it reads MAESTATTTA. The interval 1-20 is disordered; the sequence is MAESTATTTAVPPPAEESWN. The next 3 helical transmembrane spans lie at 60-80, 90-110, and 121-143; these read PLTKWIVLGVVSLQFTCAYLL, FFLTAYFIGAFCNQNLFLAIH, and TLYNRAYCLFANLPVGAPFAASF. The Histidine box-1 signature appears at 110–114; that stretch reads HELSH. The short motif at 147 to 151 is the Histidine box-2 element; that stretch reads HMEHH. Helical transmembrane passes span 169–189, 200–220, and 228–248; these read LILFDNVLGKAFFCTFQLLFY, PFTLMHFWNIIVQFSFDYLVV, and LAYFFMSSFLAGSLHPTAGHF. Residues 290 to 294 carry the Histidine box-3 motif; it reads HIEHH.

This sequence belongs to the fatty acid desaturase type 1 family. DEGS subfamily.

Its subcellular location is the membrane. It catalyses the reaction an N-acylsphinganine + 2 Fe(II)-[cytochrome b5] + O2 + 2 H(+) = an N-acylsphing-4-enine + 2 Fe(III)-[cytochrome b5] + 2 H2O. It functions in the pathway lipid metabolism; sphingolipid metabolism. In terms of biological role, delta(4)-fatty-acid desaturase which introduces a double bond at the 4-position in the long-chain base (LCB) of ceramides. Required for sphingosine biosynthesis. The sequence is that of Sphingolipid delta(4)-desaturase (dsd1) from Schizosaccharomyces pombe (strain 972 / ATCC 24843) (Fission yeast).